Consider the following 179-residue polypeptide: Large ribosomal subunit protein uL5 (179 aa).

Belongs to the universal ribosomal protein uL5 family. As to quaternary structure, part of the 50S ribosomal subunit; part of the 5S rRNA/L5/L18/L25 subcomplex. Contacts the 5S rRNA and the P site tRNA. Forms a bridge to the 30S subunit in the 70S ribosome.

In terms of biological role, this is one of the proteins that bind and probably mediate the attachment of the 5S RNA into the large ribosomal subunit, where it forms part of the central protuberance. In the 70S ribosome it contacts protein S13 of the 30S subunit (bridge B1b), connecting the 2 subunits; this bridge is implicated in subunit movement. Contacts the P site tRNA; the 5S rRNA and some of its associated proteins might help stabilize positioning of ribosome-bound tRNAs. The sequence is that of Large ribosomal subunit protein uL5 from Macrococcus caseolyticus (strain JCSC5402) (Macrococcoides caseolyticum).